The following is a 1024-amino-acid chain: Beta-galactosidase (1024 aa).

Residues Asn103 and Asp202 each coordinate substrate. Na(+) is bound at residue Asp202. Residues Glu417, His419, and Glu462 each coordinate Mg(2+). Residues Glu462 and 538–541 each bind substrate; that span reads EYAH. Glu462 functions as the Proton donor in the catalytic mechanism. The Nucleophile role is filled by Glu538. Position 598 (Asn598) interacts with Mg(2+). Residues Phe602 and Asn605 each contribute to the Na(+) site. 2 residues coordinate substrate: Asn605 and Trp1000.

Belongs to the glycosyl hydrolase 2 family. As to quaternary structure, homotetramer. Mg(2+) is required as a cofactor. Na(+) serves as cofactor.

It carries out the reaction Hydrolysis of terminal non-reducing beta-D-galactose residues in beta-D-galactosides.. The polypeptide is Beta-galactosidase (Escherichia coli O157:H7).